Consider the following 278-residue polypeptide: tRNA pseudouridine synthase A (278 aa).

D51 functions as the Nucleophile in the catalytic mechanism. Y109 contributes to the substrate binding site.

Belongs to the tRNA pseudouridine synthase TruA family. In terms of assembly, homodimer.

The catalysed reaction is uridine(38/39/40) in tRNA = pseudouridine(38/39/40) in tRNA. In terms of biological role, formation of pseudouridine at positions 38, 39 and 40 in the anticodon stem and loop of transfer RNAs. This is tRNA pseudouridine synthase A from Paracidovorax citrulli (strain AAC00-1) (Acidovorax citrulli).